The chain runs to 429 residues: UDP-N-acetylglucosamine 1-carboxyvinyltransferase (429 aa).

Residue K22–N23 participates in phosphoenolpyruvate binding. A UDP-N-acetyl-alpha-D-glucosamine-binding site is contributed by R102. Residue C126 is the Proton donor of the active site. 2-(S-cysteinyl)pyruvic acid O-phosphothioketal is present on C126. UDP-N-acetyl-alpha-D-glucosamine is bound by residues R131 to L135, D316, and I338.

This sequence belongs to the EPSP synthase family. MurA subfamily.

The protein localises to the cytoplasm. The enzyme catalyses phosphoenolpyruvate + UDP-N-acetyl-alpha-D-glucosamine = UDP-N-acetyl-3-O-(1-carboxyvinyl)-alpha-D-glucosamine + phosphate. It participates in cell wall biogenesis; peptidoglycan biosynthesis. Functionally, cell wall formation. Adds enolpyruvyl to UDP-N-acetylglucosamine. The polypeptide is UDP-N-acetylglucosamine 1-carboxyvinyltransferase (Nitrobacter hamburgensis (strain DSM 10229 / NCIMB 13809 / X14)).